The sequence spans 248 residues: Triosephosphate isomerase (248 aa).

Position 9 to 11 (9 to 11) interacts with substrate; it reads NWK. Residue His94 is the Electrophile of the active site. Glu166 serves as the catalytic Proton acceptor. Substrate is bound by residues Gly172, Ser212, and 233 to 234; that span reads GG.

It belongs to the triosephosphate isomerase family. As to quaternary structure, homodimer.

It is found in the cytoplasm. The catalysed reaction is D-glyceraldehyde 3-phosphate = dihydroxyacetone phosphate. Its pathway is carbohydrate biosynthesis; gluconeogenesis. It functions in the pathway carbohydrate degradation; glycolysis; D-glyceraldehyde 3-phosphate from glycerone phosphate: step 1/1. In terms of biological role, involved in the gluconeogenesis. Catalyzes stereospecifically the conversion of dihydroxyacetone phosphate (DHAP) to D-glyceraldehyde-3-phosphate (G3P). The sequence is that of Triosephosphate isomerase from Thermoanaerobacter sp. (strain X514).